The sequence spans 92 residues: Small ribosomal subunit protein bS18 (92 aa).

Belongs to the bacterial ribosomal protein bS18 family. Part of the 30S ribosomal subunit. Forms a tight heterodimer with protein bS6.

Binds as a heterodimer with protein bS6 to the central domain of the 16S rRNA, where it helps stabilize the platform of the 30S subunit. The chain is Small ribosomal subunit protein bS18 from Chlorobium chlorochromatii (strain CaD3).